A 348-amino-acid polypeptide reads, in one-letter code: Phospho-2-dehydro-3-deoxyheptonate aldolase, Trp-sensitive (348 aa).

It belongs to the class-I DAHP synthase family.

The enzyme catalyses D-erythrose 4-phosphate + phosphoenolpyruvate + H2O = 7-phospho-2-dehydro-3-deoxy-D-arabino-heptonate + phosphate. It functions in the pathway metabolic intermediate biosynthesis; chorismate biosynthesis; chorismate from D-erythrose 4-phosphate and phosphoenolpyruvate: step 1/7. In terms of biological role, stereospecific condensation of phosphoenolpyruvate (PEP) and D-erythrose-4-phosphate (E4P) giving rise to 3-deoxy-D-arabino-heptulosonate-7-phosphate (DAHP). The sequence is that of Phospho-2-dehydro-3-deoxyheptonate aldolase, Trp-sensitive (aroH) from Escherichia coli (strain K12).